A 423-amino-acid chain; its full sequence is Glutamate-1-semialdehyde 2,1-aminomutase (423 aa).

Lys-258 carries the N6-(pyridoxal phosphate)lysine modification.

Belongs to the class-III pyridoxal-phosphate-dependent aminotransferase family. HemL subfamily. Pyridoxal 5'-phosphate is required as a cofactor.

Its subcellular location is the cytoplasm. It catalyses the reaction (S)-4-amino-5-oxopentanoate = 5-aminolevulinate. The protein operates within porphyrin-containing compound metabolism; protoporphyrin-IX biosynthesis; 5-aminolevulinate from L-glutamyl-tRNA(Glu): step 2/2. In Pyrobaculum aerophilum (strain ATCC 51768 / DSM 7523 / JCM 9630 / CIP 104966 / NBRC 100827 / IM2), this protein is Glutamate-1-semialdehyde 2,1-aminomutase.